The following is a 334-amino-acid chain: Phenylalanine--tRNA ligase alpha subunit (334 aa).

Glutamate 249 lines the Mg(2+) pocket.

Belongs to the class-II aminoacyl-tRNA synthetase family. Phe-tRNA synthetase alpha subunit type 1 subfamily. In terms of assembly, tetramer of two alpha and two beta subunits. Mg(2+) serves as cofactor.

The protein resides in the cytoplasm. It catalyses the reaction tRNA(Phe) + L-phenylalanine + ATP = L-phenylalanyl-tRNA(Phe) + AMP + diphosphate + H(+). In Desulfatibacillum aliphaticivorans, this protein is Phenylalanine--tRNA ligase alpha subunit.